Reading from the N-terminus, the 381-residue chain is GDP-mannose transporter (381 aa).

Residues 1 to 44 (MAEGKKTDDYTIQMDSIDQGNKSFEAPPPPQPRSPPSGSLSNNP) lie on the Cytoplasmic side of the membrane. A disordered region spans residues 19-41 (QGNKSFEAPPPPQPRSPPSGSLS). Positions 26–35 (APPPPQPRSP) are enriched in pro residues. Residues 45–65 (ILPVLAYCGSSILMTVMNKYV) form a helical membrane-spanning segment. At 66-70 (LSGTD) the chain is on the lumenal side. A helical transmembrane segment spans residues 71–91 (FNLNFFLLCIQSLVCIIAIQT). Topologically, residues 92-109 (CKSCGLITYRDFSADEAR) are cytoplasmic. Residues 110 to 126 (KWFPITLLLIGMIYTGS) traverse the membrane as a helical segment. The Lumenal portion of the chain corresponds to 127–133 (KALQFLS). The helical transmembrane segment at 134–150 (IPVYTIFKNLTIILIAY) threads the bilayer. The Cytoplasmic portion of the chain corresponds to 151 to 159 (GEVLWFGGS). The helical transmembrane segment at 160 to 181 (VTGLTLFSFGLMVLSSIIAAWA) threads the bilayer. Over 182-199 (DIKHAVESNGDATAKVST) the chain is Lumenal. The chain crosses the membrane as a helical span at residues 200–220 (LNAGYIWMLVNCLCTSSYVLG). The Cytoplasmic segment spans residues 221–234 (MRKRIKLTNFKDFD). Residues 235 to 255 (TMFYNNLLSIPVLIVLSAFLE) form a helical membrane-spanning segment. Residues 256–273 (DWSSTNVNRNFPPMDRNS) are Lumenal-facing. The helical transmembrane segment at 274 to 294 (IVFAMILSGLSSVFISYTSAW) threads the bilayer. Topologically, residues 295–302 (CVRVTSST) are cytoplasmic. Residues 303 to 323 (TYSMVGALNKLPIAISGLIFF) traverse the membrane as a helical segment. The Lumenal segment spans residues 324–326 (DAP). Residues 327 to 347 (VTFPSVSAIVVGFVSGIVYAV) traverse the membrane as a helical segment. Topologically, residues 348–381 (AKIKQNAKPRTGVLPTANPPVSASSQSMRDSLRS) are cytoplasmic. Positions 358–381 (TGVLPTANPPVSASSQSMRDSLRS) are disordered. Over residues 366 to 381 (PPVSASSQSMRDSLRS) the composition is skewed to polar residues.

This sequence belongs to the TPT transporter family. SLC35D subfamily. In terms of assembly, homooligomer.

Its subcellular location is the golgi apparatus membrane. The protein localises to the cytoplasmic vesicle membrane. It localises to the endoplasmic reticulum membrane. Its function is as follows. Involved in the import of GDP-mannose from the cytoplasm into the Golgi lumen. This is GDP-mannose transporter (gmt1) from Aspergillus niger (strain ATCC MYA-4892 / CBS 513.88 / FGSC A1513).